A 179-amino-acid polypeptide reads, in one-letter code: MAEEIVVGRIGRPHGIRGEVTIEIRTDVPHRRFVVGAVLGREGGGTALTVSGAHWHSGRLLLHFRGVDDRGAAEALRGVLLTIDADQAGSPLDDADGDGEAVEMWWDRDLVGLRAVTTAGMLLGHVTDIIHSPAGDLLAIGGPDGGEHLVPFVRDIVPTVDPPAGRIVVDPPPGLLDLD.

In terms of domain architecture, PRC barrel spans valine 102–leucine 175.

The protein belongs to the RimM family. As to quaternary structure, binds ribosomal protein uS19.

It is found in the cytoplasm. Its function is as follows. An accessory protein needed during the final step in the assembly of 30S ribosomal subunit, possibly for assembly of the head region. Essential for efficient processing of 16S rRNA. May be needed both before and after RbfA during the maturation of 16S rRNA. It has affinity for free ribosomal 30S subunits but not for 70S ribosomes. This Frankia casuarinae (strain DSM 45818 / CECT 9043 / HFP020203 / CcI3) protein is Ribosome maturation factor RimM.